The primary structure comprises 492 residues: N-succinylglutamate 5-semialdehyde dehydrogenase (492 aa).

An NAD(+)-binding site is contributed by Gly-220 to Gly-225. Catalysis depends on residues Glu-243 and Cys-277.

The protein belongs to the aldehyde dehydrogenase family. AstD subfamily.

The catalysed reaction is N-succinyl-L-glutamate 5-semialdehyde + NAD(+) + H2O = N-succinyl-L-glutamate + NADH + 2 H(+). It participates in amino-acid degradation; L-arginine degradation via AST pathway; L-glutamate and succinate from L-arginine: step 4/5. Catalyzes the NAD-dependent reduction of succinylglutamate semialdehyde into succinylglutamate. This chain is N-succinylglutamate 5-semialdehyde dehydrogenase, found in Shigella flexneri serotype 5b (strain 8401).